A 313-amino-acid chain; its full sequence is tRNA-cytidine(32) 2-sulfurtransferase (313 aa).

A PP-loop motif motif is present at residues 47–52 (SGGKDS). 3 residues coordinate [4Fe-4S] cluster: Cys-122, Cys-125, and Cys-213. A disordered region spans residues 288 to 313 (PVGWQPEDDEDTEKRPPVRLDVLEIK). Basic and acidic residues predominate over residues 299-313 (TEKRPPVRLDVLEIK).

It belongs to the TtcA family. In terms of assembly, homodimer. It depends on Mg(2+) as a cofactor. [4Fe-4S] cluster serves as cofactor.

Its subcellular location is the cytoplasm. The catalysed reaction is cytidine(32) in tRNA + S-sulfanyl-L-cysteinyl-[cysteine desulfurase] + AH2 + ATP = 2-thiocytidine(32) in tRNA + L-cysteinyl-[cysteine desulfurase] + A + AMP + diphosphate + H(+). The protein operates within tRNA modification. Its function is as follows. Catalyzes the ATP-dependent 2-thiolation of cytidine in position 32 of tRNA, to form 2-thiocytidine (s(2)C32). The sulfur atoms are provided by the cysteine/cysteine desulfurase (IscS) system. The protein is tRNA-cytidine(32) 2-sulfurtransferase of Yersinia pseudotuberculosis serotype O:1b (strain IP 31758).